Reading from the N-terminus, the 227-residue chain is Phosphoribosylformylglycinamidine synthase subunit PurQ (227 aa).

In terms of domain architecture, Glutamine amidotransferase type-1 spans 3–225 (FAVIVFPGSN…LKQWRETYVV (223 aa)). C86 serves as the catalytic Nucleophile. Catalysis depends on residues H194 and E196.

Part of the FGAM synthase complex composed of 1 PurL, 1 PurQ and 2 PurS subunits.

The protein resides in the cytoplasm. The enzyme catalyses N(2)-formyl-N(1)-(5-phospho-beta-D-ribosyl)glycinamide + L-glutamine + ATP + H2O = 2-formamido-N(1)-(5-O-phospho-beta-D-ribosyl)acetamidine + L-glutamate + ADP + phosphate + H(+). It catalyses the reaction L-glutamine + H2O = L-glutamate + NH4(+). The protein operates within purine metabolism; IMP biosynthesis via de novo pathway; 5-amino-1-(5-phospho-D-ribosyl)imidazole from N(2)-formyl-N(1)-(5-phospho-D-ribosyl)glycinamide: step 1/2. In terms of biological role, part of the phosphoribosylformylglycinamidine synthase complex involved in the purines biosynthetic pathway. Catalyzes the ATP-dependent conversion of formylglycinamide ribonucleotide (FGAR) and glutamine to yield formylglycinamidine ribonucleotide (FGAM) and glutamate. The FGAM synthase complex is composed of three subunits. PurQ produces an ammonia molecule by converting glutamine to glutamate. PurL transfers the ammonia molecule to FGAR to form FGAM in an ATP-dependent manner. PurS interacts with PurQ and PurL and is thought to assist in the transfer of the ammonia molecule from PurQ to PurL. In Bacillus cereus (strain B4264), this protein is Phosphoribosylformylglycinamidine synthase subunit PurQ.